A 288-amino-acid chain; its full sequence is Sulfur carrier protein FdhD (288 aa).

The active-site Cysteine persulfide intermediate is cysteine 122. 268–273 (FVRGER) is a Mo-bis(molybdopterin guanine dinucleotide) binding site.

This sequence belongs to the FdhD family.

The protein localises to the cytoplasm. Its function is as follows. Required for formate dehydrogenase (FDH) activity. Acts as a sulfur carrier protein that transfers sulfur from IscS to the molybdenum cofactor prior to its insertion into FDH. This is Sulfur carrier protein FdhD from Anaeromyxobacter dehalogenans (strain 2CP-C).